The primary structure comprises 265 residues: Isoprenyl transferase 1 (265 aa).

Asp-43 is an active-site residue. Asp-43 is a binding site for Mg(2+). Substrate-binding positions include 44–47 (GNRR), Trp-48, His-61, and 89–91 (STE). Asn-92 acts as the Proton acceptor in catalysis. Substrate contacts are provided by residues Arg-95, Arg-214, and 220 to 222 (RLS). Glu-233 contacts Mg(2+).

This sequence belongs to the UPP synthase family. As to quaternary structure, homodimer. Mg(2+) is required as a cofactor.

Catalyzes the condensation of isopentenyl diphosphate (IPP) with allylic pyrophosphates generating different type of terpenoids. The chain is Isoprenyl transferase 1 from Corynebacterium diphtheriae (strain ATCC 700971 / NCTC 13129 / Biotype gravis).